The primary structure comprises 538 residues: Fructooligosaccharide ABC transporter substrate-binding protein FusA (538 aa).

The first 22 residues, 1–22 (MKFKTFSKSAVLLTASLAVLAA), serve as a signal peptide directing secretion. Cys23 carries the N-palmitoyl cysteine lipid modification. Cys23 is lipidated: S-diacylglycerol cysteine. Glu167 serves as a coordination point for substrate. Ca(2+)-binding residues include Asp215, Asn217, Asn219, Glu221, Asp223, and Glu224. Asn235 contributes to the substrate binding site. Positions 263, 264, 267, and 268 each coordinate Ca(2+). Substrate contacts are provided by Trp314, Asn318, Lys353, Trp384, Arg419, and Glu423.

It belongs to the bacterial solute-binding protein 1 family. As to quaternary structure, the complex is composed of two ATP-binding proteins (MsmK), two transmembrane proteins (FusB and FusC) and a solute-binding protein (FusA).

Its subcellular location is the cell membrane. Its function is as follows. Part of the ABC transporter complex FusABC-MsmK involved in short- and long-chain fructooligosaccharide (FOS) import. Required for the utilization of long-chain FOSs. Binds kestose, nystose, fructofuranosyl-nystose and inulin, but not sucrose. Has a preference for long-chain FOSs (tetrasaccharides and larger). This chain is Fructooligosaccharide ABC transporter substrate-binding protein FusA, found in Streptococcus pneumoniae serotype 4 (strain ATCC BAA-334 / TIGR4).